Consider the following 57-residue polypeptide: uncharacterized protein (57 aa).

A helical membrane pass occupies residues 10–27 (FGLLWLIIGSEAFHLNAL). Residues 28 to 55 (KQDHLERMKQYDAKIRLAKHEFDDTSNE) are a coiled coil.

Its subcellular location is the membrane. This is an uncharacterized protein from Schizosaccharomyces pombe (strain 972 / ATCC 24843) (Fission yeast).